An 830-amino-acid chain; its full sequence is Cadherin-16 (830 aa).

A signal peptide spans 1–21 (MISARPWLLYLSVIQAFTTEA). Over 22-788 (QPAESLHTEV…MKGMPTKLSA (767 aa)) the chain is Extracellular. 6 consecutive Cadherin domains span residues 27-128 (LHTE…VPQF), 133-237 (YRAQ…SIVE), 244-338 (EPVH…APVC), 343-451 (PTVN…APEF), 457-566 (GPVT…PLKL), and 571-667 (YETS…VPAL). Asn-519, Asn-604, and Asn-724 each carry an N-linked (GlcNAc...) asparagine glycan. The segment at 668–788 (TLSAGPSRHL…MKGMPTKLSA (121 aa)) is ectodomain G. Residues 789–809 (VGVLLGTLAAIGFILILVFTH) traverse the membrane as a helical segment. Residues 810-830 (LALARKDLDQPADSVPLKAAV) lie on the Cytoplasmic side of the membrane. Position 823 is a phosphoserine (Ser-823).

As to expression, kidney specific.

It is found in the cell membrane. Cadherins are calcium-dependent cell adhesion proteins. They preferentially interact with themselves in a homophilic manner in connecting cells; cadherins may thus contribute to the sorting of heterogeneous cell types. This is Cadherin-16 (Cdh16) from Mus musculus (Mouse).